The sequence spans 410 residues: Peptidase T (410 aa).

His79 contributes to the Zn(2+) binding site. Asp81 is an active-site residue. A Zn(2+)-binding site is contributed by Asp142. Glu176 functions as the Proton acceptor in the catalytic mechanism. Zn(2+) contacts are provided by Glu177, Asp199, and His381.

It belongs to the peptidase M20B family. The cofactor is Zn(2+).

The protein localises to the cytoplasm. It catalyses the reaction Release of the N-terminal residue from a tripeptide.. Cleaves the N-terminal amino acid of tripeptides. The polypeptide is Peptidase T (Listeria welshimeri serovar 6b (strain ATCC 35897 / DSM 20650 / CCUG 15529 / CIP 8149 / NCTC 11857 / SLCC 5334 / V8)).